An 89-amino-acid polypeptide reads, in one-letter code: Large ribosomal subunit protein uL29 (89 aa).

Belongs to the universal ribosomal protein uL29 family.

In Frankia alni (strain DSM 45986 / CECT 9034 / ACN14a), this protein is Large ribosomal subunit protein uL29.